Reading from the N-terminus, the 108-residue chain is uncharacterized protein (108 aa).

N-linked (GlcNAc...) asparagine glycosylation is present at N33.

N-glycosylated.

This is an uncharacterized protein from Saccharomyces cerevisiae (strain ATCC 204508 / S288c) (Baker's yeast).